Here is a 207-residue protein sequence, read N- to C-terminus: Large ribosomal subunit protein uL3 (207 aa).

The interval 129-152 (AGGPAGHGSRFQRHPGSIGSNTTP) is disordered.

Belongs to the universal ribosomal protein uL3 family. In terms of assembly, part of the 50S ribosomal subunit. Forms a cluster with proteins L14 and L19.

One of the primary rRNA binding proteins, it binds directly near the 3'-end of the 23S rRNA, where it nucleates assembly of the 50S subunit. The protein is Large ribosomal subunit protein uL3 of Leptospira biflexa serovar Patoc (strain Patoc 1 / ATCC 23582 / Paris).